Reading from the N-terminus, the 688-residue chain is Glycine--tRNA ligase beta subunit (688 aa).

Belongs to the class-II aminoacyl-tRNA synthetase family. In terms of assembly, tetramer of two alpha and two beta subunits.

It localises to the cytoplasm. It catalyses the reaction tRNA(Gly) + glycine + ATP = glycyl-tRNA(Gly) + AMP + diphosphate. The sequence is that of Glycine--tRNA ligase beta subunit from Shewanella oneidensis (strain ATCC 700550 / JCM 31522 / CIP 106686 / LMG 19005 / NCIMB 14063 / MR-1).